The sequence spans 146 residues: Holo-[acyl-carrier-protein] synthase (146 aa).

Mg(2+) contacts are provided by Asp9 and Glu63.

Belongs to the P-Pant transferase superfamily. AcpS family. The cofactor is Mg(2+).

The protein localises to the cytoplasm. It catalyses the reaction apo-[ACP] + CoA = holo-[ACP] + adenosine 3',5'-bisphosphate + H(+). Its function is as follows. Transfers the 4'-phosphopantetheine moiety from coenzyme A to a Ser of acyl-carrier-protein. The polypeptide is Holo-[acyl-carrier-protein] synthase (Burkholderia ambifaria (strain MC40-6)).